Consider the following 304-residue polypeptide: Ribosomal RNA small subunit methyltransferase H (304 aa).

S-adenosyl-L-methionine-binding positions include 37-39 (GGH), D57, F85, D100, and H107.

This sequence belongs to the methyltransferase superfamily. RsmH family.

It localises to the cytoplasm. The catalysed reaction is cytidine(1402) in 16S rRNA + S-adenosyl-L-methionine = N(4)-methylcytidine(1402) in 16S rRNA + S-adenosyl-L-homocysteine + H(+). In terms of biological role, specifically methylates the N4 position of cytidine in position 1402 (C1402) of 16S rRNA. In Azobacteroides pseudotrichonymphae genomovar. CFP2, this protein is Ribosomal RNA small subunit methyltransferase H.